Consider the following 147-residue polypeptide: Cytochrome c-type biogenesis protein CcmE (147 aa).

The Cytoplasmic portion of the chain corresponds to 1–9; sequence MKSLKKQRR. A helical; Signal-anchor for type II membrane protein membrane pass occupies residues 10–30; that stretch reads IQIIALATVALVGSTALIGYA. The Periplasmic segment spans residues 31–147; that stretch reads MRDGINYFRS…EQGVYREGDS (117 aa). His-123 and Tyr-127 together coordinate heme.

The protein belongs to the CcmE/CycJ family.

The protein localises to the cell inner membrane. Its function is as follows. Heme chaperone required for the biogenesis of c-type cytochromes. Transiently binds heme delivered by CcmC and transfers the heme to apo-cytochromes in a process facilitated by CcmF and CcmH. This Ruegeria sp. (strain TM1040) (Silicibacter sp.) protein is Cytochrome c-type biogenesis protein CcmE.